Consider the following 308-residue polypeptide: 4-hydroxyproline 2-epimerase (308 aa).

Cys-88 acts as the Proton acceptor in catalysis. Residues 89–90, His-208, and Asp-232 contribute to the substrate site; that span reads GH. Catalysis depends on Cys-236, which acts as the Proton donor. 237-238 is a substrate binding site; it reads GT.

Belongs to the proline racemase family.

It carries out the reaction trans-4-hydroxy-L-proline = cis-4-hydroxy-D-proline. Catalyzes the reversible epimerization of cis-4-hydroxy-D-proline (c4DHyp) to trans-4-hydroxy-L-proline (t4LHyp). May be involved in a degradation pathway that allows P.putida strain KT2440 to grow on either epimer of 4-hydroxyproline, c4DHyp and t4LHyp, as the sole carbon and nitrogen source. Does not exhibit measureable racemase activity in vitro with any of the 19 natural chiral amino acid enantiomers. The protein is 4-hydroxyproline 2-epimerase of Pseudomonas putida (strain ATCC 47054 / DSM 6125 / CFBP 8728 / NCIMB 11950 / KT2440).